Reading from the N-terminus, the 534-residue chain is Unguisins hydrolase ungD' (534 aa).

The protein belongs to the peptidase S12 family.

The protein operates within secondary metabolite biosynthesis. Its function is as follows. Hydrolase; part of the gene cluster that mediates the biosynthesis of the unguisins, gamma-aminobutyric acid (GABA)-containing fungal cyclic heptapeptides with the amino acid sequence cyclo-(D-Ala1-D-Val2-L-Leu3-beta-MePhe4-D-Ala5-D-Trp6-GABA7) for unguisin H and cyclo-(D-Ala1-D-Ala2-L-Leu3-beta-MePhe4-D-Ala5-D-Trp6-GABA7) for unguisin I. Within the pathway, the hydrolase ungD' catalyzes the hydrolysis between the D-tryptophan and GABA residues of unguisins H and I to produce the corresponding linear peptides. The alanine racemase ungC' catalyzes the interconversion of L-alanine and D-alanine, providing the D-alanine which is accepted by the first adenylation domain of the nonribosomal peptide synthetase (NRPS) ungA', whereas the methyltransferase ungE' provides the (2R,3R)-beta-methylphenylalanine residue incorporated by the module 4. UngA' is the main enzyme within the cluster which condenses the 7 residues using its respective 7 modules. The terminal condensation domain (Ct) is involved in cyclization with D-alanine and thereby releasing of unguisins H and I. The protein is Unguisins hydrolase ungD' of Aspergillus campestris (strain IBT 28561).